The sequence spans 463 residues: Xanthine permease XanP (463 aa).

The next 12 membrane-spanning stretches (helical) occupy residues 43 to 63 (LLAM…ALGL), 71 to 91 (IISM…KAWG), 93 to 113 (VGSG…PLIM), 126 to 146 (PTMM…EMVI), 156 to 176 (IITP…LIQV), 192 to 212 (TFGA…IILL), 222 to 242 (VASL…MGML), 260 to 280 (LYYG…VFMI), 352 to 372 (GFVV…SGFV), 379 to 399 (VLGG…VRIV), 409 to 429 (ILII…PLIL), and 439 to 459 (LLSS…LIFP).

It belongs to the nucleobase:cation symporter-2 (NCS2) (TC 2.A.40) family.

The protein localises to the cell inner membrane. It catalyses the reaction xanthine(in) + H(+)(in) = xanthine(out) + H(+)(out). Specific, proton motive force-dependent high-affinity transporter for xanthine. This Escherichia coli O6:H1 (strain CFT073 / ATCC 700928 / UPEC) protein is Xanthine permease XanP (xanP).